A 165-amino-acid chain; its full sequence is Large ribosomal subunit protein uL5 (165 aa).

This sequence belongs to the universal ribosomal protein uL5 family. Part of the 50S ribosomal subunit; contacts the 5S rRNA and probably tRNA. Forms a bridge to the 30S subunit in the 70S ribosome.

This is one of the proteins that bind and probably mediate the attachment of the 5S RNA into the large ribosomal subunit, where it forms part of the central protuberance. In the 70S ribosome it contacts protein S13 of the 30S subunit (bridge B1b), connecting the 2 subunits; this bridge is implicated in subunit movement. May contact the P site tRNA; the 5S rRNA and some of its associated proteins might help stabilize positioning of ribosome-bound tRNAs. This Methanoregula boonei (strain DSM 21154 / JCM 14090 / 6A8) protein is Large ribosomal subunit protein uL5.